The primary structure comprises 178 residues: Large ribosomal subunit protein uL5 (178 aa).

The protein belongs to the universal ribosomal protein uL5 family. As to quaternary structure, part of the 50S ribosomal subunit; part of the 5S rRNA/L5/L18/L25 subcomplex. Contacts the 5S rRNA and the P site tRNA. Forms a bridge to the 30S subunit in the 70S ribosome.

Functionally, this is one of the proteins that bind and probably mediate the attachment of the 5S RNA into the large ribosomal subunit, where it forms part of the central protuberance. In the 70S ribosome it contacts protein S13 of the 30S subunit (bridge B1b), connecting the 2 subunits; this bridge is implicated in subunit movement. Contacts the P site tRNA; the 5S rRNA and some of its associated proteins might help stabilize positioning of ribosome-bound tRNAs. This chain is Large ribosomal subunit protein uL5, found in Syntrophomonas wolfei subsp. wolfei (strain DSM 2245B / Goettingen).